The following is a 492-amino-acid chain: Bifunctional purine biosynthesis protein PurH (492 aa).

The region spanning 1-144 (MKKAILSVSN…KNFKHVTTIV (144 aa)) is the MGS-like domain.

It belongs to the PurH family.

It catalyses the reaction (6R)-10-formyltetrahydrofolate + 5-amino-1-(5-phospho-beta-D-ribosyl)imidazole-4-carboxamide = 5-formamido-1-(5-phospho-D-ribosyl)imidazole-4-carboxamide + (6S)-5,6,7,8-tetrahydrofolate. The enzyme catalyses IMP + H2O = 5-formamido-1-(5-phospho-D-ribosyl)imidazole-4-carboxamide. It functions in the pathway purine metabolism; IMP biosynthesis via de novo pathway; 5-formamido-1-(5-phospho-D-ribosyl)imidazole-4-carboxamide from 5-amino-1-(5-phospho-D-ribosyl)imidazole-4-carboxamide (10-formyl THF route): step 1/1. It participates in purine metabolism; IMP biosynthesis via de novo pathway; IMP from 5-formamido-1-(5-phospho-D-ribosyl)imidazole-4-carboxamide: step 1/1. This chain is Bifunctional purine biosynthesis protein PurH, found in Staphylococcus haemolyticus (strain JCSC1435).